Reading from the N-terminus, the 187-residue chain is Bifunctional protein PyrR (187 aa).

The PRPP-binding motif lies at 109-121 (VILVDDVLYSGRS).

Belongs to the purine/pyrimidine phosphoribosyltransferase family. PyrR subfamily.

The catalysed reaction is UMP + diphosphate = 5-phospho-alpha-D-ribose 1-diphosphate + uracil. In terms of biological role, regulates the transcription of the pyrimidine nucleotide (pyr) operon in response to exogenous pyrimidines. Also displays a weak uracil phosphoribosyltransferase activity which is not physiologically significant. This chain is Bifunctional protein PyrR, found in Mycobacterium ulcerans (strain Agy99).